The following is a 205-amino-acid chain: MELYTALLAVTILSPSSIVGLPGECSVNVIPKKNLDKAKFFSGTWYETHYLDMDPQATEKFCFSFAPRESGGTVKEALYHFNVDSKVSFYNTGTGPLESNGAKYTAKFNTVDKKGKEIKPADEKYSYTVTVIEAAKQSALIHICLQEDGKDIGDLYSVLNRNKNALPNKKIKKALNKVSLVLTKFVVTKDLDCKYDDKFLSSWQK.

An N-terminal signal peptide occupies residues 1-20 (MELYTALLAVTILSPSSIVG). 2 cysteine pairs are disulfide-bonded: cysteine 25/cysteine 144 and cysteine 62/cysteine 193. Residue aspartate 52 participates in histamine binding. Positions 80 and 91 each coordinate heme. Position 154 (aspartate 154) interacts with histamine.

Belongs to the calycin superfamily. Nitrophorin family. As to quaternary structure, forms oligomers (at pH 5.5). Requires heme b as cofactor. In terms of tissue distribution, expressed in the endothelial cells of the salivary glands.

It is found in the secreted. The enzyme catalyses 3 nitrite + 2 H(+) = 2 nitric oxide + nitrate + H2O. Its function is as follows. Converts nitrite as the sole substrate to form nitric oxide gas (NO). NO(2-) serves both as an electron donor and as an electron acceptor. Binds to negatively charged cell surfaces of activated platelets; binds to L-a-phosphatidyl-L-serine (PS)-bearing phospholipid membranes. Once bound on an activated platelet, NP7 releases its stored nitric oxide gas (NO) into the victim's tissues while feeding, resulting in vasodilation and inhibition of platelet aggregation. Also acts as an anticoagulant by blocking coagulation-factor binding sites. Has antihistamine activity; binds histamine with high affinity. In Rhodnius prolixus (Triatomid bug), this protein is Nitrophorin-7.